Here is a 627-residue protein sequence, read N- to C-terminus: Serine/threonine-protein phosphatase 2A 56 kDa regulatory subunit delta 2 isoform (627 aa).

Positions 1-37 (MKGLRSKFVKALSLKDEQGSHKNGHSKSHYISKNGSY) are disordered.

This sequence belongs to the phosphatase 2A regulatory subunit B family. In terms of assembly, PP2A consists of a common heterodimeric core enzyme, composed of a 36 kDa catalytic subunit (subunit C) and a 65 kDa constant regulatory subunit (PR65 or subunit A), that associates with a variety of regulatory subunits. Proteins that associate with the core dimer include three families of regulatory subunits B (the R2/B/PR55/B55, R3/B''/PR72/PR130/PR59 and R5/B'/B56 families), the 48 kDa variable regulatory subunit, viral proteins, and cell signaling molecules.

It is found in the cytoplasm. The protein resides in the cell tip. In terms of biological role, the B regulatory subunit might modulate substrate selectivity and catalytic activity, and might also direct the localization of the catalytic enzyme to a particular subcellular compartment. Has a role in cell shape control and septum formation. This chain is Serine/threonine-protein phosphatase 2A 56 kDa regulatory subunit delta 2 isoform (par2), found in Schizosaccharomyces pombe (strain 972 / ATCC 24843) (Fission yeast).